Reading from the N-terminus, the 415-residue chain is MTSSHLIDTEQLLADQLAQASPDLLRGLLSTFIAALMGAEADALCGAGYRERSDERSNQRNGYRHRDFDTRAATIDVAIPKLRQGSYFPDWLLQRRKRAERALTSVVATCYLLGVSTRRMERLVETLGVTKLSKSQVSIMAKELDEAVEAFRTRPLDAGPYTFLAADALVLKVREAGRVVGVHTLIATGVNAEGYREILGIQVTSAEDGAGWLAFFRDLVARGLSGVALVTSDAHAGLVAAIGATLPAAAWQRCRTHYAANLMAATPKPSWPWVRTLLHSIYDQPDAESVVAQYDRVLDALTDKLPAVAEHLDTARTDLLAFTAFPKQIWRQIWSNNPQERLNREVRRRTDVVGIFPDRASIIRLVGAVLAEQHDEWIEGRRYLGLEVLTRARAALTSTEEPAKQQTTNTPALTT.

Belongs to the transposase mutator family.

Its function is as follows. Required for the transposition of the insertion element. This chain is Transposase for insertion sequence element IS1081, found in Mycobacterium bovis (strain ATCC BAA-935 / AF2122/97).